The chain runs to 432 residues: Ribulose bisphosphate carboxylase-like protein 2 (432 aa).

Mg(2+)-binding residues include K198, D200, and E201. K198 bears the N6-carboxylysine mark.

Belongs to the RuBisCO large chain family. Type IV subfamily. As to quaternary structure, homodimer. Requires Mg(2+) as cofactor.

In terms of biological role, may be involved in sulfur metabolism and oxidative stress response. Does not show RuBisCO activity. This chain is Ribulose bisphosphate carboxylase-like protein 2 (rlp2), found in Rhodopseudomonas palustris (strain ATCC BAA-98 / CGA009).